A 283-amino-acid chain; its full sequence is Putative 4-diphosphocytidyl-2-C-methyl-D-erythritol kinase (283 aa).

Residue K10 is part of the active site. 94-104 (PVCAGLGGGST) serves as a coordination point for ATP. D136 is an active-site residue.

The protein belongs to the GHMP kinase family. IspE subfamily.

The catalysed reaction is 4-CDP-2-C-methyl-D-erythritol + ATP = 4-CDP-2-C-methyl-D-erythritol 2-phosphate + ADP + H(+). Functionally, catalyzes the phosphorylation of the position 2 hydroxy group of 4-diphosphocytidyl-2C-methyl-D-erythritol. The chain is Putative 4-diphosphocytidyl-2-C-methyl-D-erythritol kinase from Streptococcus agalactiae serotype III (strain NEM316).